The chain runs to 664 residues: UvrABC system protein B (664 aa).

One can recognise a Helicase ATP-binding domain in the interval Asn25 to Glu170. Gly38 to Thr45 lines the ATP pocket. The Beta-hairpin signature appears at Tyr91–Ile114. In terms of domain architecture, Helicase C-terminal spans Gln429–Leu595. The region spanning Lys622–Lys657 is the UVR domain.

The protein belongs to the UvrB family. As to quaternary structure, forms a heterotetramer with UvrA during the search for lesions. Interacts with UvrC in an incision complex.

The protein resides in the cytoplasm. Its function is as follows. The UvrABC repair system catalyzes the recognition and processing of DNA lesions. A damage recognition complex composed of 2 UvrA and 2 UvrB subunits scans DNA for abnormalities. Upon binding of the UvrA(2)B(2) complex to a putative damaged site, the DNA wraps around one UvrB monomer. DNA wrap is dependent on ATP binding by UvrB and probably causes local melting of the DNA helix, facilitating insertion of UvrB beta-hairpin between the DNA strands. Then UvrB probes one DNA strand for the presence of a lesion. If a lesion is found the UvrA subunits dissociate and the UvrB-DNA preincision complex is formed. This complex is subsequently bound by UvrC and the second UvrB is released. If no lesion is found, the DNA wraps around the other UvrB subunit that will check the other stand for damage. In Borreliella afzelii (strain PKo) (Borrelia afzelii), this protein is UvrABC system protein B.